Here is a 331-residue protein sequence, read N- to C-terminus: RNA 3'-terminal phosphate cyclase (331 aa).

ATP is bound by residues glutamine 100 and 276–280; that span reads HLADQ. Catalysis depends on histidine 301, which acts as the Tele-AMP-histidine intermediate.

This sequence belongs to the RNA 3'-terminal cyclase family. Type 1 subfamily.

It localises to the cytoplasm. The catalysed reaction is a 3'-end 3'-phospho-ribonucleotide-RNA + ATP = a 3'-end 2',3'-cyclophospho-ribonucleotide-RNA + AMP + diphosphate. In terms of biological role, catalyzes the conversion of 3'-phosphate to a 2',3'-cyclic phosphodiester at the end of RNA. The mechanism of action of the enzyme occurs in 3 steps: (A) adenylation of the enzyme by ATP; (B) transfer of adenylate to an RNA-N3'P to produce RNA-N3'PP5'A; (C) and attack of the adjacent 2'-hydroxyl on the 3'-phosphorus in the diester linkage to produce the cyclic end product. The biological role of this enzyme is unknown but it is likely to function in some aspects of cellular RNA processing. The chain is RNA 3'-terminal phosphate cyclase from Methanosarcina barkeri (strain Fusaro / DSM 804).